Reading from the N-terminus, the 432-residue chain is Ribosome biogenesis protein WDR12 homolog (432 aa).

Residues 13 to 97 form a ubiquitin-like (UBL) domain region; that stretch reads LQIRLVALNK…ESVIEVVYFQ (85 aa). WD repeat units follow at residues 109–146, 148–190, 197–236, 265–303, 305–345, 352–392, and 396–432; these read LHSD…YAIF, GHES…KSVE, GHTQ…KDDD, GHTD…NKSD, NVNK…DQTV, SHKN…APLY, and GHED…AQRS.

This sequence belongs to the WD repeat WDR12/YTM1 family.

It localises to the nucleus. It is found in the nucleolus. Its subcellular location is the nucleoplasm. Functionally, required for maturation of ribosomal RNAs and formation of the large ribosomal subunit. This chain is Ribosome biogenesis protein WDR12 homolog, found in Trichoplax adhaerens (Trichoplax reptans).